Reading from the N-terminus, the 946-residue chain is Protein dct-6 (946 aa).

Residues 326–363 are a coiled coil; the sequence is YMDMNDQIEQMIALLVDQLEELEKLEQLCDEVQKTGNQ.

May have a role in tumor suppression. The sequence is that of Protein dct-6 from Caenorhabditis briggsae.